Reading from the N-terminus, the 337-residue chain is Glycine N(alpha)-acyltransferase (337 aa).

The protein belongs to the acetyltransferase family.

The enzyme catalyses a (3R)-hydroxyacyl-[ACP] + glycine = a lyso-glycine lipid + holo-[ACP] + H(+). It carries out the reaction (3R)-hydroxyhexadecanoyl-[ACP] + glycine = N-[(3R)-3-hydroxyhexadecanoyl]-glycine + holo-[ACP] + H(+). It participates in lipid metabolism. Is involved in the production of glycine lipids (GL), which are phosphorus-free membrane lipids important for fitness during growth of the human gut bacterium B.thetaiotaomicron in vivo and in vitro. Catalyzes the first step of GL biosynthesis, i.e. the N-acylation of glycine via addition of a 3-hydroxy fatty acyl group, to form a range of monoacylated glycine (also named lyso-glycine lipids or lyso-GL). Is important for the ability of B.thetaiotaomicron to adapt to stress and colonize the mammalian gut. Also seems to be required for the production of flavolipin, an acylated serine-glycine dipeptide. This chain is Glycine N(alpha)-acyltransferase, found in Bacteroides thetaiotaomicron (strain ATCC 29148 / DSM 2079 / JCM 5827 / CCUG 10774 / NCTC 10582 / VPI-5482 / E50).